Reading from the N-terminus, the 210-residue chain is Thymidylate kinase (210 aa).

Gly11–Thr18 serves as a coordination point for ATP.

It belongs to the thymidylate kinase family.

The catalysed reaction is dTMP + ATP = dTDP + ADP. In terms of biological role, phosphorylation of dTMP to form dTDP in both de novo and salvage pathways of dTTP synthesis. The sequence is that of Thymidylate kinase (tmk) from Mycoplasma pneumoniae (strain ATCC 29342 / M129 / Subtype 1) (Mycoplasmoides pneumoniae).